Reading from the N-terminus, the 112-residue chain is UPF0060 membrane protein Mpe_A1656 (112 aa).

The next 4 helical transmembrane spans lie at G9–L29, S34–L54, A65–V85, and L91–A111.

This sequence belongs to the UPF0060 family.

The protein resides in the cell inner membrane. In Methylibium petroleiphilum (strain ATCC BAA-1232 / LMG 22953 / PM1), this protein is UPF0060 membrane protein Mpe_A1656.